A 243-amino-acid chain; its full sequence is Carboxy-S-adenosyl-L-methionine synthase (243 aa).

Residues Y39, 64-66 (GCS), 90-91 (DN), 118-119 (DL), N133, and R200 contribute to the S-adenosyl-L-methionine site.

Belongs to the class I-like SAM-binding methyltransferase superfamily. Cx-SAM synthase family. As to quaternary structure, homodimer.

The enzyme catalyses prephenate + S-adenosyl-L-methionine = carboxy-S-adenosyl-L-methionine + 3-phenylpyruvate + H2O. Functionally, catalyzes the conversion of S-adenosyl-L-methionine (SAM) to carboxy-S-adenosyl-L-methionine (Cx-SAM). This chain is Carboxy-S-adenosyl-L-methionine synthase, found in Idiomarina loihiensis (strain ATCC BAA-735 / DSM 15497 / L2-TR).